A 358-amino-acid chain; its full sequence is Mesaconyl-CoA hydratase (358 aa).

The MaoC-like domain maps to 44 to 148 (AHDPGLRLTH…TSSSRPQYGI (105 aa)).

The protein belongs to the enoyl-CoA hydratase/isomerase family.

It carries out the reaction (2R,3S)-beta-methylmalyl-CoA = 2-methylfumaryl-CoA + H2O. Involved in the methylaspartate cycle. Catalyzes the reversible hydration of mesaconyl-CoA (2-methylfumaryl-CoA) to yield beta-methylmalyl-CoA ((2R,3S)-beta-methylmalyl-CoA). The sequence is that of Mesaconyl-CoA hydratase from Haloarcula marismortui (strain ATCC 43049 / DSM 3752 / JCM 8966 / VKM B-1809) (Halobacterium marismortui).